A 968-amino-acid polypeptide reads, in one-letter code: RNA polymerase-associated protein RapA (968 aa).

The Helicase ATP-binding domain maps to 164–334 (DVGRRHAPRV…FARLRLLDPN (171 aa)). 177-184 (DEVGLGKT) is a binding site for ATP. The DEAH box signature appears at 280 to 283 (DEAH). One can recognise a Helicase C-terminal domain in the interval 490-662 (RVEWLMGYLT…YLASPDQTEG (173 aa)).

This sequence belongs to the SNF2/RAD54 helicase family. RapA subfamily. In terms of assembly, interacts with the RNAP. Has a higher affinity for the core RNAP than for the holoenzyme. Its ATPase activity is stimulated by binding to RNAP.

Transcription regulator that activates transcription by stimulating RNA polymerase (RNAP) recycling in case of stress conditions such as supercoiled DNA or high salt concentrations. Probably acts by releasing the RNAP, when it is trapped or immobilized on tightly supercoiled DNA. Does not activate transcription on linear DNA. Probably not involved in DNA repair. The chain is RNA polymerase-associated protein RapA from Shigella dysenteriae serotype 1 (strain Sd197).